The following is a 688-amino-acid chain: Glycine--tRNA ligase beta subunit (688 aa).

The protein belongs to the class-II aminoacyl-tRNA synthetase family. In terms of assembly, tetramer of two alpha and two beta subunits.

The protein localises to the cytoplasm. The enzyme catalyses tRNA(Gly) + glycine + ATP = glycyl-tRNA(Gly) + AMP + diphosphate. The polypeptide is Glycine--tRNA ligase beta subunit (Listeria monocytogenes serovar 1/2a (strain ATCC BAA-679 / EGD-e)).